The following is a 274-amino-acid chain: WIMGHMVNAIEQVGEFLNLGADAIEFDFDFDKDGIAQVTHHGIPCDCGRKCTKKAIFTEYLDNIRQVTTPDDPKFREQLVLLALDLKLQRISSAKAYRAGEDVAKKLLDHYWQRGNSRARAYILLNIPLVEDYEFIRAFKDTLKNEGYESYNDKVGINFSGNEDLDKIRDVLEILGIHKQVWQADGITSCFARGTERLKEALEKRDTPGYNYINKVYAWTLVRKSIMRRSLRLGVDGVMSNNPDRVIKALKEKEFADKFRLATYNDNPWEKFRG.

Residue H5 is part of the active site. Mg(2+)-binding residues include E25 and D27. The active-site Nucleophile is the H41. Cystine bridges form between C45/C51 and C47/C190. Position 85 (D85) interacts with Mg(2+).

The protein belongs to the arthropod phospholipase D family. Class II subfamily. It depends on Mg(2+) as a cofactor. As to expression, expressed by the venom gland.

It is found in the secreted. The enzyme catalyses an N-(acyl)-sphingosylphosphocholine = an N-(acyl)-sphingosyl-1,3-cyclic phosphate + choline. The catalysed reaction is an N-(acyl)-sphingosylphosphoethanolamine = an N-(acyl)-sphingosyl-1,3-cyclic phosphate + ethanolamine. It catalyses the reaction a 1-acyl-sn-glycero-3-phosphocholine = a 1-acyl-sn-glycero-2,3-cyclic phosphate + choline. It carries out the reaction a 1-acyl-sn-glycero-3-phosphoethanolamine = a 1-acyl-sn-glycero-2,3-cyclic phosphate + ethanolamine. Dermonecrotic toxins cleave the phosphodiester linkage between the phosphate and headgroup of certain phospholipids (sphingolipid and lysolipid substrates), forming an alcohol (often choline) and a cyclic phosphate. This toxin acts on sphingomyelin (SM). It may also act on ceramide phosphoethanolamine (CPE), lysophosphatidylcholine (LPC) and lysophosphatidylethanolamine (LPE), but not on lysophosphatidylserine (LPS), and lysophosphatidylglycerol (LPG). It acts by transphosphatidylation, releasing exclusively cyclic phosphate products as second products. Induces dermonecrosis, hemolysis, increased vascular permeability, edema, inflammatory response, and platelet aggregation. This chain is Dermonecrotic toxin SdSicTox-betaIIB1bv, found in Sicarius cf. damarensis (strain GJB-2008) (Six-eyed sand spider).